The sequence spans 340 residues: DNA-directed RNA polymerase subunit alpha (340 aa).

The interval 1–233 is alpha N-terminal domain (alpha-NTD); it reads MIQDEIPIPV…DLFIIFLNME (233 aa). The alpha C-terminal domain (alpha-CTD) stretch occupies residues 264–340; sequence AKEVAFKQIF…QLPKDQFNIS (77 aa).

This sequence belongs to the RNA polymerase alpha chain family. In terms of assembly, in plastids the minimal PEP RNA polymerase catalytic core is composed of four subunits: alpha, beta, beta', and beta''. When a (nuclear-encoded) sigma factor is associated with the core the holoenzyme is formed, which can initiate transcription.

It is found in the plastid. It localises to the chloroplast. It catalyses the reaction RNA(n) + a ribonucleoside 5'-triphosphate = RNA(n+1) + diphosphate. Its function is as follows. DNA-dependent RNA polymerase catalyzes the transcription of DNA into RNA using the four ribonucleoside triphosphates as substrates. This chain is DNA-directed RNA polymerase subunit alpha, found in Psilotum nudum (Whisk fern).